The following is a 283-amino-acid chain: Shikimate dehydrogenase (NADP(+)) (283 aa).

Residues 19–21 (SFS) and Thr-66 contribute to the shikimate site. Lys-70 functions as the Proton acceptor in the catalytic mechanism. Glu-82 provides a ligand contact to NADP(+). Shikimate contacts are provided by Asn-91 and Asp-106. NADP(+) contacts are provided by residues 129–133 (GAGGA) and Ile-225. Tyr-227 serves as a coordination point for shikimate. NADP(+) is bound at residue Gly-248.

It belongs to the shikimate dehydrogenase family. In terms of assembly, homodimer.

The catalysed reaction is shikimate + NADP(+) = 3-dehydroshikimate + NADPH + H(+). It functions in the pathway metabolic intermediate biosynthesis; chorismate biosynthesis; chorismate from D-erythrose 4-phosphate and phosphoenolpyruvate: step 4/7. Its function is as follows. Involved in the biosynthesis of the chorismate, which leads to the biosynthesis of aromatic amino acids. Catalyzes the reversible NADPH linked reduction of 3-dehydroshikimate (DHSA) to yield shikimate (SA). The polypeptide is Shikimate dehydrogenase (NADP(+)) (Methanosphaera stadtmanae (strain ATCC 43021 / DSM 3091 / JCM 11832 / MCB-3)).